A 413-amino-acid polypeptide reads, in one-letter code: S-adenosylmethionine synthase (413 aa).

His-15 contributes to the ATP binding site. Position 17 (Asp-17) interacts with Mg(2+). Glu-43 provides a ligand contact to K(+). Glu-56 and Gln-100 together coordinate L-methionine. Positions 100-110 (QSPDISQGVNE) are flexible loop. ATP contacts are provided by residues 171–173 (DGK), 248–249 (KF), Asp-257, 263–264 (RK), Ala-280, and Lys-284. Asp-257 provides a ligand contact to L-methionine. An L-methionine-binding site is contributed by Lys-288.

Belongs to the AdoMet synthase family. As to quaternary structure, homotetramer; dimer of dimers. Requires Mg(2+) as cofactor. K(+) serves as cofactor.

The protein localises to the cytoplasm. It carries out the reaction L-methionine + ATP + H2O = S-adenosyl-L-methionine + phosphate + diphosphate. It functions in the pathway amino-acid biosynthesis; S-adenosyl-L-methionine biosynthesis; S-adenosyl-L-methionine from L-methionine: step 1/1. Functionally, catalyzes the formation of S-adenosylmethionine (AdoMet) from methionine and ATP. The overall synthetic reaction is composed of two sequential steps, AdoMet formation and the subsequent tripolyphosphate hydrolysis which occurs prior to release of AdoMet from the enzyme. In Prochlorococcus marinus (strain MIT 9215), this protein is S-adenosylmethionine synthase.